A 319-amino-acid chain; its full sequence is Acetyl-coenzyme A carboxylase carboxyl transferase subunit alpha (319 aa).

A CoA carboxyltransferase C-terminal domain is found at R39–E293.

The protein belongs to the AccA family. In terms of assembly, acetyl-CoA carboxylase is a heterohexamer composed of biotin carboxyl carrier protein (AccB), biotin carboxylase (AccC) and two subunits each of ACCase subunit alpha (AccA) and ACCase subunit beta (AccD).

It is found in the cytoplasm. It carries out the reaction N(6)-carboxybiotinyl-L-lysyl-[protein] + acetyl-CoA = N(6)-biotinyl-L-lysyl-[protein] + malonyl-CoA. It participates in lipid metabolism; malonyl-CoA biosynthesis; malonyl-CoA from acetyl-CoA: step 1/1. Component of the acetyl coenzyme A carboxylase (ACC) complex. First, biotin carboxylase catalyzes the carboxylation of biotin on its carrier protein (BCCP) and then the CO(2) group is transferred by the carboxyltransferase to acetyl-CoA to form malonyl-CoA. This is Acetyl-coenzyme A carboxylase carboxyl transferase subunit alpha from Neisseria meningitidis serogroup C (strain 053442).